Reading from the N-terminus, the 310-residue chain is Protein CUP-SHAPED COTYLEDON 1 (310 aa).

The region spanning 20-172 (MPPGFRFHPT…EWVLCKVCLK (153 aa)) is the NAC domain. A DNA-binding region spans residues 119 to 178 (LGMKKTLVFYKGRAPKGEKSCWVMHEYRLDGKFSYHYISSSAKDEWVLCKVCLKSGVVSR). 2 involved in transactivation activity regions span residues 179–210 (ETNL…NTFA) and 306–310 (WPFTL).

As to expression, expressed in inflorescence stems, rosette leaves, aerial parts of seedlings, flowers, floral buds and roots.

It is found in the nucleus. Transcription activator of STM and KNAT6. Involved in molecular mechanisms regulating shoot apical meristem (SAM) formation during embryogenesis and organ separation. Required for the fusion of septa of gynoecia along the length of the ovaries. Activates the shoot formation in callus in a STM-dependent manner. Seems to act as an inhibitor of cell division. In Arabidopsis thaliana (Mouse-ear cress), this protein is Protein CUP-SHAPED COTYLEDON 1 (NAC054).